Reading from the N-terminus, the 122-residue chain is MIQMQSTLDVACNSGARRVQCIKVLGGSHRRYAGIGDIIKVSVKEAIPRAKAKKGDVYNAVVVRTKKGVRRPDGSVIRFDRNAAVLLNNNLQPIGTRIFGPVTRELRTEQFMKIVSLAPEVL.

This sequence belongs to the universal ribosomal protein uL14 family. In terms of assembly, part of the 50S ribosomal subunit. Forms a cluster with proteins L3 and L19. In the 70S ribosome, L14 and L19 interact and together make contacts with the 16S rRNA in bridges B5 and B8.

Binds to 23S rRNA. Forms part of two intersubunit bridges in the 70S ribosome. This Shewanella amazonensis (strain ATCC BAA-1098 / SB2B) protein is Large ribosomal subunit protein uL14.